Here is a 351-residue protein sequence, read N- to C-terminus: Riboflavin-binding protein RibY (351 aa).

Residues 1–19 (MMKLRVLTLGILIILLITA) form the signal peptide. Cys-20 carries N-palmitoyl cysteine lipidation. A lipid anchor (S-diacylglycerol cysteine) is attached at Cys-20.

It belongs to the NMT1 family. The complex is likely composed of an ATP-binding protein, a transmembrane protein (RibX) and a solute-binding protein (RibY).

The protein localises to the cell membrane. Functionally, part of an ABC transporter complex that transports riboflavin into the cell. Binds riboflavin. The sequence is that of Riboflavin-binding protein RibY from Chloroflexus aurantiacus (strain ATCC 29366 / DSM 635 / J-10-fl).